We begin with the raw amino-acid sequence, 66 residues long: Large ribosomal subunit protein uL30 (66 aa).

This sequence belongs to the universal ribosomal protein uL30 family. In terms of assembly, part of the 50S ribosomal subunit.

In Chelativorans sp. (strain BNC1), this protein is Large ribosomal subunit protein uL30.